Here is a 711-residue protein sequence, read N- to C-terminus: 1,4-alpha-glucan-branching enzyme (711 aa).

2 residues coordinate (1,4-alpha-D-glucosyl)n: Trp-98 and Lys-135. Catalysis depends on Asp-353, which acts as the Nucleophile. The active-site Proton donor is the Glu-414.

This sequence belongs to the glycosyl hydrolase 13 family. GlgB subfamily.

The protein localises to the cytoplasm. It carries out the reaction Transfers a segment of a (1-&gt;4)-alpha-D-glucan chain to a primary hydroxy group in a similar glucan chain.. It participates in glycan biosynthesis; glycogen biosynthesis. Functionally, glycogen-branching enzyme participates in the glycogen biosynthetic process along with glycogenin and glycogen synthase. Generates alpha-1,6-glucosidic branches from alpha-1,4-linked glucose chains, to increase solubility of the glycogen polymer. The polypeptide is 1,4-alpha-glucan-branching enzyme (GLC3) (Debaryomyces hansenii (strain ATCC 36239 / CBS 767 / BCRC 21394 / JCM 1990 / NBRC 0083 / IGC 2968) (Yeast)).